Here is a 675-residue protein sequence, read N- to C-terminus: Parasporal crystal protein Cry18Ba (675 aa).

This sequence belongs to the delta endotoxin family.

Functionally, binds to the brush border membrane vesicles of scarab larvae and damages the gut wall somehow to allow the vegetative cells of P.popilliae to enter the hemolymph. This chain is Parasporal crystal protein Cry18Ba (cry18Ba), found in Paenibacillus popilliae (Bacillus popilliae).